A 598-amino-acid polypeptide reads, in one-letter code: Elongation factor 4 (598 aa).

The tr-type G domain occupies 4-181 (KKIRNFAIIA…AIVNLIPPPQ (178 aa)). GTP-binding positions include 16–21 (DHGKST) and 128–131 (NKID).

This sequence belongs to the TRAFAC class translation factor GTPase superfamily. Classic translation factor GTPase family. LepA subfamily.

The protein resides in the cell membrane. It carries out the reaction GTP + H2O = GDP + phosphate + H(+). Required for accurate and efficient protein synthesis under certain stress conditions. May act as a fidelity factor of the translation reaction, by catalyzing a one-codon backward translocation of tRNAs on improperly translocated ribosomes. Back-translocation proceeds from a post-translocation (POST) complex to a pre-translocation (PRE) complex, thus giving elongation factor G a second chance to translocate the tRNAs correctly. Binds to ribosomes in a GTP-dependent manner. This is Elongation factor 4 from Mesomycoplasma hyopneumoniae (strain J / ATCC 25934 / NCTC 10110) (Mycoplasma hyopneumoniae).